The sequence spans 627 residues: MPGTKRYQHVIETPEPGEWELSGYEAAVPITEKSNPLTRNLDKADAEKIVKLLGQCDAEIFQEEGQIVPTYQRLYSESVLTTMLQVAGKVQEVLKEPDGGLVVLSGGGTSGRMAFLMSVSFNQLMKGLGQKPLYTYLIAGGDRSVVASREQTEDSALHGIEELKKVAAGKKRVVVIGISVGLSAPFVAGQMDYCMDNTAVFLPVLVGFNPVSMARNDPIEDWRSTFRQVAERMQKMQEKQEAFVLNPAIGPEGLSGSSRMKGGGATKILLETLLLAAHKTVDQGVVSSQRCLLEILRTFERAHQVTYSQSSKIATLMKQVGISLEKKGRVHLVGWQTLGIIAIMDGVECIHTFGADFQDIRGFLIGDHSDMFNQKDELTNQGPQFTFSQDDFLTSILPSLTETDTVVFIFTLDDNLTEVQALAERVREKCQNIQALVHSTVGQSLPAPLKKLFPSLISITWPLLFFDYEGTYVQKFQRELSTKWVLNTVSTGAHVLLGKILQNHMLDLRIANSKLFWRALAMLQRFSGQSKARCIESLLQAIHFPQPLSDDVRAAPISCHVQVAHEKEKVIPTALLSLLLRCSISEAKARLSAASSVCEVVRSALSGPGQKRSTQALEDPPACGTLN.

SIS domains lie at 90–286 (VQEV…QGVV) and 320–499 (VGIS…LLGK). Beta-D-fructose 1-phosphate contacts are provided by residues 109–110 (TS), Glu153, and 179–181 (SVG). 109–110 (TS) contacts beta-D-fructose 6-phosphate. 179-181 (SVG) contributes to the beta-D-fructose 6-phosphate binding site. Residues 199-200 (AV) are important for interaction with GCK. Glu348 contacts beta-D-fructose 1-phosphate. The essential for interaction with GCK stretch occupies residues 463–465 (LLF). Lys514 contributes to the beta-D-fructose 1-phosphate binding site. A beta-D-fructose 6-phosphate-binding site is contributed by Lys514.

It belongs to the GCKR family. As to quaternary structure, interacts (fructose 6-phosphate bound form) with GCK. In terms of tissue distribution, detected in liver (at protein level). Not detected in muscle, brain, heart, testis, intestine or spleen.

The protein localises to the cytoplasm. It is found in the nucleus. The protein resides in the mitochondrion. Its function is as follows. Regulates glucokinase (GCK) by forming an inactive complex with this enzyme. Acts by promoting GCK recruitment to the nucleus, possibly to provide a reserve of GCK that can be quickly released in the cytoplasm after a meal. The affinity of GCKR for GCK is modulated by fructose metabolites: GCKR with bound fructose 6-phosphate has increased affinity for GCK, while GCKR with bound fructose 1-phosphate has strongly decreased affinity for GCK and does not inhibit GCK activity. The protein is Glucokinase regulatory protein of Rattus norvegicus (Rat).